The chain runs to 351 residues: UDP-N-acetylglucosamine--N-acetylmuramyl-(pentapeptide) pyrophosphoryl-undecaprenol N-acetylglucosamine transferase (351 aa).

UDP-N-acetyl-alpha-D-glucosamine-binding positions include 13 to 15 (TGG), Asn-125, Arg-161, Ser-189, Ile-241, 260 to 265 (ALTVCE), and Gln-285.

The protein belongs to the glycosyltransferase 28 family. MurG subfamily.

The protein resides in the cell inner membrane. It catalyses the reaction di-trans,octa-cis-undecaprenyl diphospho-N-acetyl-alpha-D-muramoyl-L-alanyl-D-glutamyl-meso-2,6-diaminopimeloyl-D-alanyl-D-alanine + UDP-N-acetyl-alpha-D-glucosamine = di-trans,octa-cis-undecaprenyl diphospho-[N-acetyl-alpha-D-glucosaminyl-(1-&gt;4)]-N-acetyl-alpha-D-muramoyl-L-alanyl-D-glutamyl-meso-2,6-diaminopimeloyl-D-alanyl-D-alanine + UDP + H(+). Its pathway is cell wall biogenesis; peptidoglycan biosynthesis. Its function is as follows. Cell wall formation. Catalyzes the transfer of a GlcNAc subunit on undecaprenyl-pyrophosphoryl-MurNAc-pentapeptide (lipid intermediate I) to form undecaprenyl-pyrophosphoryl-MurNAc-(pentapeptide)GlcNAc (lipid intermediate II). The polypeptide is UDP-N-acetylglucosamine--N-acetylmuramyl-(pentapeptide) pyrophosphoryl-undecaprenol N-acetylglucosamine transferase (Haemophilus influenzae (strain ATCC 51907 / DSM 11121 / KW20 / Rd)).